A 200-amino-acid chain; its full sequence is Large ribosomal subunit protein uL4 (200 aa).

The segment at 45-64 (QKTRAEVSGGGIKPWRQKGT) is disordered.

It belongs to the universal ribosomal protein uL4 family. In terms of assembly, part of the 50S ribosomal subunit.

Its function is as follows. One of the primary rRNA binding proteins, this protein initially binds near the 5'-end of the 23S rRNA. It is important during the early stages of 50S assembly. It makes multiple contacts with different domains of the 23S rRNA in the assembled 50S subunit and ribosome. Forms part of the polypeptide exit tunnel. This chain is Large ribosomal subunit protein uL4, found in Psychrobacter cryohalolentis (strain ATCC BAA-1226 / DSM 17306 / VKM B-2378 / K5).